The sequence spans 214 residues: Cysteine-rich venom protein LEI1 (214 aa).

A signal peptide spans 1–18; sequence MIAFILLSLAAVLQQSFG. Residues 37–165 form the SCP domain; it reads VNMHNSLRRS…YYSYFYVCQY (129 aa). 5 disulfide bridges follow: Cys74–Cys152, Cys91–Cys166, Cys147–Cys163, Cys185–Cys192, and Cys188–Cys197. The ShKT domain maps to 201-214; it reads CTVENKFTNCNTLV.

It belongs to the CRISP family. In terms of tissue distribution, expressed by the venom gland.

It is found in the secreted. Functionally, blocks contraction of smooth muscle elicited by high potassium-induced depolarization, but does not block caffeine-stimulated contraction. May target voltage-gated calcium channels on smooth muscle. The polypeptide is Cysteine-rich venom protein LEI1 (Leioheterodon madagascariensis (Malagasy giant hognose snake)).